The primary structure comprises 348 residues: Rhodopsin (348 aa).

Residues 1–33 lie on the Extracellular side of the membrane; the sequence is TEGPYFYIPMVNTTGIVRSPYEYPQYYLVNPAA. Residue asparagine 12 is glycosylated (N-linked (GlcNAc...) asparagine). A helical membrane pass occupies residues 34-58; sequence YAMLGAYMFFLIIVGFPVNFMTLYV. At 59–70 the chain is on the cytoplasmic side; the sequence is TLEHKKLRTPLN. Residues 71-93 traverse the membrane as a helical segment; the sequence is YILLNLAVADLFMVIGGFTTTIY. Topologically, residues 94-107 are extracellular; it reads TSMHGYFVLGRLGC. Cysteine 107 and cysteine 184 are disulfide-bonded. The helical transmembrane segment at 108-130 threads the bilayer; the sequence is NIEGFFATLGGMISLWSLAVLAI. Positions 131 to 133 match the 'Ionic lock' involved in activated form stabilization motif; that stretch reads ERW. Topologically, residues 131–149 are cytoplasmic; that stretch reads ERWVVVCKPISNFRFGENH. The chain crosses the membrane as a helical span at residues 150-170; it reads AIMGVSLTWAMALACTVPPLV. Residues 171–199 lie on the Extracellular side of the membrane; the sequence is GWSRYIPEGMQCSCGIDYYTRAEGFNNES. An N-linked (GlcNAc...) asparagine glycan is attached at asparagine 197. The helical transmembrane segment at 200 to 221 threads the bilayer; it reads FVLYMFFCHFTIPLTIIFFCYG. Topologically, residues 222-249 are cytoplasmic; sequence RLLCAVKEAAAAQQESETTQRAEREVTR. The chain crosses the membrane as a helical span at residues 250–271; it reads MVIIMVIGFLICWLPYASVAWF. The Extracellular segment spans residues 272–283; it reads IFTHQGSEFGPL. A helical membrane pass occupies residues 284-305; sequence FMTIPAFFAKSSSIYNPMIYIC. The residue at position 293 (lysine 293) is an N6-(retinylidene)lysine. The Cytoplasmic portion of the chain corresponds to 306 to 348; the sequence is MNKQFRHCMITTLFCGKNPFEGEEEGASSTKTEASSASSVSPA. Cysteine 320 carries S-palmitoyl cysteine lipidation. The disordered stretch occupies residues 327–348; it reads GEEEGASSTKTEASSASSVSPA. Residues 332–348 are compositionally biased toward low complexity; that stretch reads ASSTKTEASSASSVSPA.

This sequence belongs to the G-protein coupled receptor 1 family. Opsin subfamily. Phosphorylated on some or all of the serine and threonine residues present in the C-terminal region. In terms of processing, contains one covalently linked retinal chromophore.

Its subcellular location is the membrane. The protein resides in the cell projection. It is found in the cilium. It localises to the photoreceptor outer segment. Functionally, photoreceptor required for image-forming vision at low light intensity. While most salt water fish species use retinal as chromophore, most freshwater fish use 3-dehydroretinal, or a mixture of retinal and 3-dehydroretinal. Light-induced isomerization of 11-cis to all-trans retinal triggers a conformational change that activates signaling via G-proteins. Subsequent receptor phosphorylation mediates displacement of the bound G-protein alpha subunit by arrestin and terminates signaling. This Sargocentron microstoma (Smallmouth squirrelfish) protein is Rhodopsin (rho).